Consider the following 92-residue polypeptide: C-C motif chemokine 4 (92 aa).

The signal sequence occupies residues 1 to 23 (MKLCVTVLSLLVLMAAFCSPALS). Intrachain disulfides connect Cys-34-Cys-58 and Cys-35-Cys-74.

Belongs to the intercrine beta (chemokine CC) family. As to quaternary structure, homodimer. Interacts with CCR5.

It is found in the secreted. In terms of biological role, monokine with inflammatory and chemokinetic properties. The protein is C-C motif chemokine 4 (CCL4) of Bos taurus (Bovine).